A 188-amino-acid chain; its full sequence is Transcription factor E (188 aa).

In terms of domain architecture, HTH TFE/IIEalpha-type spans 9 to 98; it reads DLEVLRDVTL…SWRLNLREVL (90 aa).

Belongs to the TFE family. As to quaternary structure, monomer. Interaction with RNA polymerase subunits RpoF and RpoE is necessary for Tfe stimulatory transcription activity. Able to interact with Tbp and RNA polymerase in the absence of DNA promoter. Interacts both with the preinitiation and elongation complexes.

Functionally, transcription factor that plays a role in the activation of archaeal genes transcribed by RNA polymerase. Facilitates transcription initiation by enhancing TATA-box recognition by TATA-box-binding protein (Tbp), and transcription factor B (Tfb) and RNA polymerase recruitment. Not absolutely required for transcription in vitro, but particularly important in cases where Tbp or Tfb function is not optimal. It dynamically alters the nucleic acid-binding properties of RNA polymerases by stabilizing the initiation complex and destabilizing elongation complexes. Seems to translocate with the RNA polymerase following initiation and acts by binding to the non template strand of the transcription bubble in elongation complexes. The chain is Transcription factor E from Methanopyrus kandleri (strain AV19 / DSM 6324 / JCM 9639 / NBRC 100938).